Reading from the N-terminus, the 166-residue chain is MAVSCSLNHSTYLQRQNLVCYLRNPHYGSLIYADGHGEVWTDWNDMSKFLQYGWRCTTNENSYSNRTLVGNWNQERYDLKNIVKPKPLPSQFGHAFETTYDANYSRKKPQSTHRFKREPHWFPGHQPELDPPHYKCTAKSTYMTNYSEPQPTHYSCCVYDPSVSQS.

Mn stretches follow at residues 98–109 (TTYDANYSRKKP) and 139–149 (KSTYMTNYSEP).

Belongs to the CFAP68 family. As to quaternary structure, microtubule inner protein component of sperm flagellar doublet microtubules.

It localises to the cytoplasm. The protein localises to the cytoskeleton. The protein resides in the cilium axoneme. It is found in the flagellum axoneme. Its subcellular location is the nucleus. It localises to the cell projection. The protein localises to the cilium. In terms of biological role, microtubule inner protein (MIP) part of the dynein-decorated doublet microtubules (DMTs) in cilia axoneme, which is required for motile cilia beating. The sequence is that of Cilia- and flagella-associated protein 68 (Cfap68) from Mus musculus (Mouse).